The following is a 219-amino-acid chain: N-(5'-phosphoribosyl)anthranilate isomerase (219 aa).

This sequence belongs to the TrpF family.

It carries out the reaction N-(5-phospho-beta-D-ribosyl)anthranilate = 1-(2-carboxyphenylamino)-1-deoxy-D-ribulose 5-phosphate. Its pathway is amino-acid biosynthesis; L-tryptophan biosynthesis; L-tryptophan from chorismate: step 3/5. This chain is N-(5'-phosphoribosyl)anthranilate isomerase, found in Mesorhizobium japonicum (strain LMG 29417 / CECT 9101 / MAFF 303099) (Mesorhizobium loti (strain MAFF 303099)).